A 166-amino-acid chain; its full sequence is Large ribosomal subunit protein uL10 (166 aa).

The protein belongs to the universal ribosomal protein uL10 family. In terms of assembly, part of the ribosomal stalk of the 50S ribosomal subunit. The N-terminus interacts with L11 and the large rRNA to form the base of the stalk. The C-terminus forms an elongated spine to which L12 dimers bind in a sequential fashion forming a multimeric L10(L12)X complex.

In terms of biological role, forms part of the ribosomal stalk, playing a central role in the interaction of the ribosome with GTP-bound translation factors. This chain is Large ribosomal subunit protein uL10, found in Bacillus mycoides (strain KBAB4) (Bacillus weihenstephanensis).